Reading from the N-terminus, the 251-residue chain is Sugar fermentation stimulation protein homolog (251 aa).

Belongs to the SfsA family.

The polypeptide is Sugar fermentation stimulation protein homolog (Symbiobacterium thermophilum (strain DSM 24528 / JCM 14929 / IAM 14863 / T)).